The chain runs to 194 residues: Probable RNA polymerase sigma factor HI_1459 (194 aa).

A Polymerase core binding motif is present at residues 45-58 (DLVQEAFLSAFKNL). The segment at residues 161-180 (SEEICQETHLTSSNLHTTLY) is a DNA-binding region (H-T-H motif).

Belongs to the sigma-70 factor family. ECF subfamily.

In Haemophilus influenzae (strain ATCC 51907 / DSM 11121 / KW20 / Rd), this protein is Probable RNA polymerase sigma factor HI_1459.